The sequence spans 861 residues: Benzylsuccinate synthase alpha subunit (861 aa).

The region spanning 40–712 (TERTRRLKAR…QAVGLYMEVG (673 aa)) is the PFL domain. The interval 718 to 744 (TPDGRFGGEAADDGGISPYSGTDKKGP) is disordered. One can recognise a Glycine radical domain in the interval 731-850 (GGISPYSGTD…IIARNEQNFN (120 aa)). Glycine 825 bears the Glycine radical mark.

The protein belongs to the glycyl radical enzyme (GRE) family. BSS subfamily. Heterohexamer composed of 2 alpha subunits, 2 beta subunits and 2 gamma subunits.

It catalyses the reaction toluene + fumarate = 2-benzylsuccinate. The protein operates within xenobiotic degradation; toluene degradation. With respect to regulation, activated by the benzylsuccinate synthase activating enzyme BssD. Rapidly inactivated by oxygen. Functionally, catalyzes the addition of fumarate to the methyl group of toluene, leading to the formation of benzylsuccinate. This Thauera aromatica protein is Benzylsuccinate synthase alpha subunit (bssA).